Consider the following 185-residue polypeptide: Thymidine kinase (185 aa).

Residue Gly-17–Thr-24 coordinates ATP. The active-site Proton acceptor is Glu-92. Residue Phe-121 participates in substrate binding. Zn(2+) contacts are provided by Cys-146 and Cys-149. Leu-166–Gly-170 contributes to the substrate binding site. Residues Cys-179 and Cys-182 each coordinate Zn(2+).

Belongs to the thymidine kinase family.

The catalysed reaction is thymidine + ATP = dTMP + ADP + H(+). In terms of biological role, phosphorylates thymidine. ASFV replicates in the cytoplasm of infected cells and contains genes encoding a number of enzymes needed for DNA synthesis, including thymidine kinase. Important for growth in swine macrophages in vitro and is a virus virulence factor in swine. This is Thymidine kinase from African swine fever virus (isolate Pig/Kenya/KEN-50/1950) (ASFV).